Consider the following 478-residue polypeptide: Glutamine synthetase (478 aa).

A GS beta-grasp domain is found at 16-100 (EKVEYVDVRF…INFFVHDPFT (85 aa)). The 371-residue stretch at 108–478 (PRNIARKAEN…PYEFALYYDV (371 aa)) folds into the GS catalytic domain. The Mg(2+) site is built by Glu-133 and Glu-135. Glu-214 is a binding site for ATP. Positions 219 and 227 each coordinate Mg(2+). 230–232 (YQF) provides a ligand contact to ATP. L-glutamate contacts are provided by residues 271–272 (NG) and Gly-272. His-276 lines the Mg(2+) pocket. ATP is bound by residues 278 to 280 (HQS) and Ser-280. L-glutamate-binding residues include Arg-329, Glu-335, and Arg-347. ATP-binding residues include Arg-347, Arg-352, and Lys-361. Glu-366 provides a ligand contact to Mg(2+). Arg-368 provides a ligand contact to L-glutamate. Tyr-406 is modified (O-AMP-tyrosine).

This sequence belongs to the glutamine synthetase family. Oligomer of 12 subunits arranged in the form of two hexagons. Requires Mg(2+) as cofactor.

Its subcellular location is the cytoplasm. It catalyses the reaction L-glutamate + NH4(+) + ATP = L-glutamine + ADP + phosphate + H(+). With respect to regulation, when cellular nitrogen levels are high, the C-terminal adenylyl transferase (AT) of GlnE inhibits GlnA by covalent transfer of an adenylyl group from ATP to Tyr-406. Conversely, when nitrogen levels are low, the N-terminal adenylyl removase (AR) of GlnE activates GlnA by removing the adenylyl group by phosphorolysis. The fully adenylated enzyme complex is inactive. In terms of biological role, involved in nitrogen metabolism via ammonium assimilation. Catalyzes the ATP-dependent biosynthesis of glutamine from glutamate and ammonia. Also plays a key role in controlling the ammonia levels within infected host cells and so contributes to the pathogens capacity to inhibit phagosome acidification and phagosome-lysosome fusion. Involved in cell wall biosynthesis via the production of the major component poly-L-glutamine (PLG). PLG synthesis in the cell wall occurs only in nitrogen limiting conditions and on the contrary high nitrogen conditions inhibit PLG synthesis. This chain is Glutamine synthetase, found in Mycobacterium bovis (strain ATCC BAA-935 / AF2122/97).